A 428-amino-acid chain; its full sequence is 3-phosphoshikimate 1-carboxyvinyltransferase (428 aa).

Positions 19, 20, and 24 each coordinate 3-phosphoshikimate. K19 serves as a coordination point for phosphoenolpyruvate. The phosphoenolpyruvate site is built by G91 and R119. 4 residues coordinate 3-phosphoshikimate: S164, Q166, D312, and K339. Q166 contributes to the phosphoenolpyruvate binding site. The active-site Proton acceptor is D312. Residues R343 and R386 each contribute to the phosphoenolpyruvate site.

This sequence belongs to the EPSP synthase family. In terms of assembly, monomer.

It localises to the cytoplasm. The enzyme catalyses 3-phosphoshikimate + phosphoenolpyruvate = 5-O-(1-carboxyvinyl)-3-phosphoshikimate + phosphate. It functions in the pathway metabolic intermediate biosynthesis; chorismate biosynthesis; chorismate from D-erythrose 4-phosphate and phosphoenolpyruvate: step 6/7. In terms of biological role, catalyzes the transfer of the enolpyruvyl moiety of phosphoenolpyruvate (PEP) to the 5-hydroxyl of shikimate-3-phosphate (S3P) to produce enolpyruvyl shikimate-3-phosphate and inorganic phosphate. This Bacillus velezensis (strain DSM 23117 / BGSC 10A6 / LMG 26770 / FZB42) (Bacillus amyloliquefaciens subsp. plantarum) protein is 3-phosphoshikimate 1-carboxyvinyltransferase.